We begin with the raw amino-acid sequence, 191 residues long: Peptidyl-tRNA hydrolase (191 aa).

Tyr16 provides a ligand contact to tRNA. The Proton acceptor role is filled by His21. Residues Tyr67, Asn69, and Asn115 each coordinate tRNA.

Belongs to the PTH family. Monomer.

Its subcellular location is the cytoplasm. The catalysed reaction is an N-acyl-L-alpha-aminoacyl-tRNA + H2O = an N-acyl-L-amino acid + a tRNA + H(+). Its function is as follows. Hydrolyzes ribosome-free peptidyl-tRNAs (with 1 or more amino acids incorporated), which drop off the ribosome during protein synthesis, or as a result of ribosome stalling. In terms of biological role, catalyzes the release of premature peptidyl moieties from peptidyl-tRNA molecules trapped in stalled 50S ribosomal subunits, and thus maintains levels of free tRNAs and 50S ribosomes. This Wigglesworthia glossinidia brevipalpis protein is Peptidyl-tRNA hydrolase.